A 420-amino-acid chain; its full sequence is Sulfate adenylyltransferase (420 aa).

The residue at position 2 (Ala-2) is an N-acetylalanine.

Belongs to the sulfate adenylyltransferase family. It depends on Mg(2+) as a cofactor.

It carries out the reaction sulfate + ATP + H(+) = adenosine 5'-phosphosulfate + diphosphate. It functions in the pathway sulfur metabolism; hydrogen sulfide biosynthesis; sulfite from sulfate: step 1/3. With respect to regulation, inhibited by adenosine 5'-phosphosulfate (APS), but not by 3'phosphoadenosine 5'-phosphosulfate (PAPS). Inhibited by AMP, ADP, CTP, GTP, ITP, UTP and anions other than those in group IV. This is Sulfate adenylyltransferase from Pyropia yezoensis (Susabi-nori).